We begin with the raw amino-acid sequence, 800 residues long: Transducin beta-like protein 3 (800 aa).

At Ala2 the chain carries N-acetylalanine. 13 WD repeats span residues 64-105 (EDQE…RLWK), 107-146 (IHTAPVASMAFDATSTLLATGGCDGAVRVWDIVQHYGTHH), 149-190 (GSPG…CLAV), 193-232 (AHYSAVTSLSFSEDGHTMLSSGRDKICIVWDLRSYETSRT), 245-284 (LPEEPALALGVKNSGLHFLTAGDQGILRVWEAASGQCVYT), 290-329 (GLRQELTHCTLARAAGLLLTVTADHNLLLYEARSLQLQKQ), 332-372 (GYSE…CQIL), 374-413 (GHTDIVLALDVFRKGWLFASCAKDQSIRIWRMNKAGQVAC), 419-459 (GHTH…PSKN), 477-516 (CHDKDINSLAVSPNDKLLATGSQDRTAKLWALPQCQLLGV), 519-560 (GHRR…KTFE), 562-602 (HDAS…RTLD), and 604-642 (HEDKVWGLHCSRLDDHAITGGSDSRIILWKDVTEAEQAE). Lys407 is covalently cross-linked (Glycyl lysine isopeptide (Lys-Gly) (interchain with G-Cter in SUMO2)).

In terms of assembly, part of the small subunit (SSU) processome, composed of more than 70 proteins and the RNA chaperone small nucleolar RNA (snoRNA) U3.

Its subcellular location is the nucleus. The protein localises to the nucleolus. Part of the small subunit (SSU) processome, first precursor of the small eukaryotic ribosomal subunit. During the assembly of the SSU processome in the nucleolus, many ribosome biogenesis factors, an RNA chaperone and ribosomal proteins associate with the nascent pre-rRNA and work in concert to generate RNA folding, modifications, rearrangements and cleavage as well as targeted degradation of pre-ribosomal RNA by the RNA exosome. This is Transducin beta-like protein 3 (Tbl3) from Rattus norvegicus (Rat).